The primary structure comprises 247 residues: 3-oxoacyl-[acyl-carrier-protein] reductase FabG (247 aa).

NADP(+) is bound by residues 12–15 (GASR), T37, 62–63 (DV), and N89. A substrate-binding site is contributed by S141. The active-site Proton acceptor is the Y154. NADP(+)-binding positions include 154-158 (YAAAK) and I187.

The protein belongs to the short-chain dehydrogenases/reductases (SDR) family. As to quaternary structure, homotetramer.

The catalysed reaction is a (3R)-hydroxyacyl-[ACP] + NADP(+) = a 3-oxoacyl-[ACP] + NADPH + H(+). It functions in the pathway lipid metabolism; fatty acid biosynthesis. Catalyzes the NADPH-dependent reduction of beta-ketoacyl-ACP substrates to beta-hydroxyacyl-ACP products, the first reductive step in the elongation cycle of fatty acid biosynthesis. The polypeptide is 3-oxoacyl-[acyl-carrier-protein] reductase FabG (fabG) (Pseudomonas aeruginosa (strain ATCC 15692 / DSM 22644 / CIP 104116 / JCM 14847 / LMG 12228 / 1C / PRS 101 / PAO1)).